The sequence spans 318 residues: Thymidylate synthase (318 aa).

DUMP is bound by residues Arg25 and 180 to 181 (RR). The Nucleophile role is filled by Cys200. DUMP is bound by residues 220 to 223 (RSGD), Asn231, and 261 to 263 (HIY). Asp223 serves as a coordination point for (6R)-5,10-methylene-5,6,7,8-tetrahydrofolate. (6R)-5,10-methylene-5,6,7,8-tetrahydrofolate is bound at residue Ala317.

Belongs to the thymidylate synthase family. Bacterial-type ThyA subfamily. Homodimer.

It localises to the cytoplasm. The enzyme catalyses dUMP + (6R)-5,10-methylene-5,6,7,8-tetrahydrofolate = 7,8-dihydrofolate + dTMP. It participates in pyrimidine metabolism; dTTP biosynthesis. Catalyzes the reductive methylation of 2'-deoxyuridine-5'-monophosphate (dUMP) to 2'-deoxythymidine-5'-monophosphate (dTMP) while utilizing 5,10-methylenetetrahydrofolate (mTHF) as the methyl donor and reductant in the reaction, yielding dihydrofolate (DHF) as a by-product. This enzymatic reaction provides an intracellular de novo source of dTMP, an essential precursor for DNA biosynthesis. This Lactobacillus delbrueckii subsp. bulgaricus (strain ATCC BAA-365 / Lb-18) protein is Thymidylate synthase.